The sequence spans 481 residues: Protein FAM83E (481 aa).

The segment at 1 to 296 (MAASQLAALE…LYAASRPLSA (296 aa)) is DUF1669. The interval 351–481 (KQETPTTTGP…ASGSGSGRRR (131 aa)) is disordered. The span at 371 to 385 (RTRTTSGPPTRPSRS) shows a compositional bias: low complexity. 2 stretches are compositionally biased toward polar residues: residues 391–400 (RLSQLSGSSD) and 465–474 (NATTSDWASG).

The protein belongs to the FAM83 family. In terms of assembly, directly interacts (via DUF1669) with CSNK1A1, CSNK1A1L, CSNK1D and CSNK1E. May interact with RAF1.

It localises to the cytoplasm. It is found in the perinuclear region. Its function is as follows. May play a role in MAPK signaling. This is Protein FAM83E from Mus musculus (Mouse).